We begin with the raw amino-acid sequence, 86 residues long: Cerebrin prohormone (86 aa).

An N-terminal signal peptide occupies residues methionine 1 to alanine 27. A propeptide spanning residues valine 28–valine 64 is cleaved from the precursor. Isoleucine 83 is subject to Isoleucine amide.

In terms of tissue distribution, expressed only in cerebral ganglion.

The protein localises to the secreted. In terms of biological role, may function as a hormone and may play a neuromodulatory role. In Aplysia californica (California sea hare), this protein is Cerebrin prohormone (CBPH).